The chain runs to 79 residues: Large ribosomal subunit protein uL24 (79 aa).

It belongs to the universal ribosomal protein uL24 family. As to quaternary structure, part of the 50S ribosomal subunit.

Its function is as follows. One of two assembly initiator proteins, it binds directly to the 5'-end of the 23S rRNA, where it nucleates assembly of the 50S subunit. One of the proteins that surrounds the polypeptide exit tunnel on the outside of the subunit. The sequence is that of Large ribosomal subunit protein uL24 from Lactobacillus johnsonii (strain CNCM I-12250 / La1 / NCC 533).